The sequence spans 1014 residues: Beta-galactosidase (1014 aa).

The Proton donor role is filled by Glu-460. The Nucleophile role is filled by Glu-527.

This sequence belongs to the glycosyl hydrolase 2 family.

It carries out the reaction Hydrolysis of terminal non-reducing beta-D-galactose residues in beta-D-galactosides.. The protein is Beta-galactosidase (lacZ) of Halalkalibacterium halodurans (strain ATCC BAA-125 / DSM 18197 / FERM 7344 / JCM 9153 / C-125) (Bacillus halodurans).